Reading from the N-terminus, the 323-residue chain is Probable oxidoreductase patJ (323 aa).

The disordered stretch occupies residues 291–323; it reads DQSANGVNGHATGVEAKKKQLGDMTRRRSGAQE. Positions 305 to 316 are enriched in basic and acidic residues; it reads EAKKKQLGDMTR.

This sequence belongs to the oxidoreductase OpS7 family.

The protein localises to the vacuole lumen. It localises to the cytoplasmic vesicle lumen. Its pathway is mycotoxin biosynthesis; patulin biosynthesis. Its function is as follows. Probable oxidoreductase; part of the gene cluster that mediates the biosynthesis of patulin, an acetate-derived tetraketide mycotoxin produced by several fungal species that shows antimicrobial properties against several bacteria. PatJ acts with patO in the vacuole to convert gentisyl alcohol to isoepoxydon. The pathway begins with the synthesis of 6-methylsalicylic acid by the polyketide synthase (PKS) patK via condensation of acetate and malonate units. The 6-methylsalicylic acid decarboxylase patG then catalyzes the decarboxylation of 6-methylsalicylic acid to yield m-cresol (also known as 3-methylphenol). These first reactions occur in the cytosol. The intermediate m-cresol is then transported into the endoplasmic reticulum where the cytochrome P450 monooxygenase patH converts it to m-hydroxybenzyl alcohol, which is further converted to gentisyl alcohol by the cytochrome P450 monooxygenase patI. The oxidoreductases patJ and patO further convert gentisyl alcohol to isoepoxydon in the vacuole. PatN catalyzes then the transformation of isoepoxydon into phyllostine. The cluster protein patF is responsible for the conversion from phyllostine to neopatulin whereas the alcohol dehydrogenase patD converts neopatulin to E-ascladiol. The steps between isoepoxydon and E-ascladiol occur in the cytosol, and E-ascladiol is probably secreted to the extracellular space by one of the cluster-specific transporters patC or patM. Finally, the secreted patulin synthase patE catalyzes the conversion of E-ascladiol to patulin. The polypeptide is Probable oxidoreductase patJ (Aspergillus clavatus (strain ATCC 1007 / CBS 513.65 / DSM 816 / NCTC 3887 / NRRL 1 / QM 1276 / 107)).